Reading from the N-terminus, the 2138-residue chain is Non-reducing polyketide synthase rads2 (2138 aa).

Residues 11–249 form an N-terminal acylcarrier protein transacylase (SAT) domain region; that stretch reads LIFGDQTDSW…NPLNIHALQH (239 aa). The region spanning 373–804 is the Ketosynthase family 3 (KS3) domain; the sequence is SGRIAIVGMA…GGNACMLLED (432 aa). Residues C549, H684, and H724 each act as for beta-ketoacyl synthase activity in the active site. The interval 901–1184 is malonyl-CoA:ACP transacylase (MAT) domain; the sequence is VFVFGGQGSH…KGVCTSFVRA (284 aa). S992 (for acyl/malonyl transferase activity) is an active-site residue. The N-terminal hotdog fold stretch occupies residues 1291 to 1437; that stretch reads AQYVVQESPS…KDVQRLQADW (147 aa). One can recognise a PKS/mFAS DH domain in the interval 1291 to 1610; that stretch reads AQYVVQESPS…FHEISNATLK (320 aa). A product template (PT) domain region spans residues 1303-1607; it reads KKIQVTFRAS…GLEFHEISNA (305 aa). Positions 1459-1610 are C-terminal hotdog fold; sequence HGHRFQPDIF…FHEISNATLK (152 aa). The disordered stretch occupies residues 1618-1666; that stretch reads SKSVLKPDNAAPLKAPEKKEDATPTAPKKSADPGKEEEEEGDTATPAAV. A Carrier domain is found at 1666 to 1740; the sequence is VGEFEVIIQT…DLRRAFAMAP (75 aa). S1700 is subject to O-(pantetheine 4'-phosphoryl)serine. The segment covering 1740 to 1771 has biased composition (low complexity); the sequence is PSSSSSTSASESVSESLDDSSSTSRSATPSSS. Disordered stretches follow at residues 1740 to 1781 and 1807 to 1828; these read PSSS…GFVE and QATK…SSPA. The segment at 1860-2006 is thioesterase (TE) domain; that stretch reads ADGTGSIATY…TRRHLGAMFS (147 aa).

It participates in secondary metabolite biosynthesis. Functionally, non-reducing polyketide synthase; part of the gene cluster that mediates the biosynthesis of radicicol, a resorcylic acid lactone (RAL) that irreversibly inhibits the HSP90 molecular chaperone, an important target for cancer chemotherapy. The cluster encodes only two apparent post-PKS enzymes, a cytochrome P450 monooxygenase (radP) and a non-heme halogenase (radH) that introduce the epoxide and the chlorine, respectively. If this cluster includes all the genes required for radicicol biosynthesis, the remaining structural features of radicicol are presumably generated by the PKSs rads1 and rads2. The C-2' ketone could arise if the R-PKS rads1 and NR-PKS rads2 each carry out four iterations, in contrast to the five iteration-three iteration split for the hypothemycin PKSs. The origin of the cis 5',6' double bond is not known. The radicicol R-PKS rads1 ER domain may catalyze either double bond isomerization or reduction in the third iteration. The polypeptide is Non-reducing polyketide synthase rads2 (Floropilus chiversii (Chaetomium chiversii)).